The following is a 277-amino-acid chain: MVTANSTVKVGNVTFSNSAPLALIAGPCQMETRDHAFEMAGRLKEMTDKLGIGLVYKSSFDKANRTSLKAARGIGLEKALEVFSDLKKEYGFPVLTDIHTEEQCAAVAPVVDVLQIPAFLCRQTDLLIAAARTGRVVNVKKGQFLAPWDMKNVLAKITESGNPNVLATERGVSFGYNTLVSDMRALPIMAGLGAPVIFDATHSVQQPGGQGGSTGGQREFVETLARAAVAVGVAGFFIETHEDPDNAPSDGPNMVPIDKMPALLEKLMAFDRIAKAL.

Belongs to the KdsA family.

The protein resides in the cytoplasm. It catalyses the reaction D-arabinose 5-phosphate + phosphoenolpyruvate + H2O = 3-deoxy-alpha-D-manno-2-octulosonate-8-phosphate + phosphate. The protein operates within carbohydrate biosynthesis; 3-deoxy-D-manno-octulosonate biosynthesis; 3-deoxy-D-manno-octulosonate from D-ribulose 5-phosphate: step 2/3. It participates in bacterial outer membrane biogenesis; lipopolysaccharide biosynthesis. The polypeptide is 2-dehydro-3-deoxyphosphooctonate aldolase (Brucella abortus (strain S19)).